The following is a 316-amino-acid chain: Acetaldehyde dehydrogenase (316 aa).

11-14 is a binding site for NAD(+); sequence SGNI. Cys131 serves as the catalytic Acyl-thioester intermediate. NAD(+) is bound by residues 162-170 and Asn289; that span reads SAGPGTRAN.

Belongs to the acetaldehyde dehydrogenase family. In terms of assembly, interacts with MhpE.

The catalysed reaction is acetaldehyde + NAD(+) + CoA = acetyl-CoA + NADH + H(+). The protein operates within aromatic compound metabolism; 3-phenylpropanoate degradation. Its function is as follows. Catalyzes the conversion of acetaldehyde to acetyl-CoA, using NAD(+) and coenzyme A. Is the final enzyme in the meta-cleavage pathway for the degradation of aromatic compounds. The chain is Acetaldehyde dehydrogenase from Shigella sonnei (strain Ss046).